The chain runs to 225 residues: Protein GrpE (225 aa).

Polar residues predominate over residues 1-15; the sequence is MSGDASTPEQDQNVV. 2 disordered regions span residues 1 to 48 and 198 to 225; these read MSGD…DRMQ and VSMG…AEEA. Residues 201-225 show a composition bias toward low complexity; the sequence is GPGPSDPGSAPAEAAAAPDQTAEEA.

This sequence belongs to the GrpE family. Homodimer.

The protein resides in the cytoplasm. Functionally, participates actively in the response to hyperosmotic and heat shock by preventing the aggregation of stress-denatured proteins, in association with DnaK and GrpE. It is the nucleotide exchange factor for DnaK and may function as a thermosensor. Unfolded proteins bind initially to DnaJ; upon interaction with the DnaJ-bound protein, DnaK hydrolyzes its bound ATP, resulting in the formation of a stable complex. GrpE releases ADP from DnaK; ATP binding to DnaK triggers the release of the substrate protein, thus completing the reaction cycle. Several rounds of ATP-dependent interactions between DnaJ, DnaK and GrpE are required for fully efficient folding. This is Protein GrpE from Synechococcus sp. (strain CC9605).